The sequence spans 358 residues: Alanine racemase (358 aa).

Lys-34 serves as the catalytic Proton acceptor; specific for D-alanine. Lys-34 is modified (N6-(pyridoxal phosphate)lysine). Arg-129 provides a ligand contact to substrate. Tyr-254 serves as the catalytic Proton acceptor; specific for L-alanine. A substrate-binding site is contributed by Met-302.

Belongs to the alanine racemase family. Requires pyridoxal 5'-phosphate as cofactor.

It carries out the reaction L-alanine = D-alanine. It participates in amino-acid biosynthesis; D-alanine biosynthesis; D-alanine from L-alanine: step 1/1. In terms of biological role, catalyzes the interconversion of L-alanine and D-alanine. May also act on other amino acids. This chain is Alanine racemase (alr), found in Aliivibrio salmonicida (strain LFI1238) (Vibrio salmonicida (strain LFI1238)).